A 225-amino-acid chain; its full sequence is Small ribosomal subunit protein uS7 (225 aa).

This sequence belongs to the universal ribosomal protein uS7 family. Component of the small ribosomal subunit. Mature ribosomes consist of a small (40S) and a large (60S) subunit. The 40S subunit contains about 32 different proteins and 1 molecule of RNA (18S). The 60S subunit contains 45 different proteins and 3 molecules of RNA (25S, 5.8S and 5S).

It is found in the cytoplasm. In terms of biological role, component of the ribosome, a large ribonucleoprotein complex responsible for the synthesis of proteins in the cell. The small ribosomal subunit (SSU) binds messenger RNAs (mRNAs) and translates the encoded message by selecting cognate aminoacyl-transfer RNA (tRNA) molecules. The large subunit (LSU) contains the ribosomal catalytic site termed the peptidyl transferase center (PTC), which catalyzes the formation of peptide bonds, thereby polymerizing the amino acids delivered by tRNAs into a polypeptide chain. The nascent polypeptides leave the ribosome through a tunnel in the LSU and interact with protein factors that function in enzymatic processing, targeting, and the membrane insertion of nascent chains at the exit of the ribosomal tunnel. The chain is Small ribosomal subunit protein uS7 (RPS5) from Candida albicans (strain SC5314 / ATCC MYA-2876) (Yeast).